The primary structure comprises 80 residues: Acyl carrier protein (80 aa).

Residues 4–79 enclose the Carrier domain; that stretch reads EEIFNKIKDL…DAVSYIKSHQ (76 aa). Position 39 is an O-(pantetheine 4'-phosphoryl)serine (Ser39).

The protein belongs to the acyl carrier protein (ACP) family. 4'-phosphopantetheine is transferred from CoA to a specific serine of apo-ACP by AcpS. This modification is essential for activity because fatty acids are bound in thioester linkage to the sulfhydryl of the prosthetic group.

It is found in the cytoplasm. It functions in the pathway lipid metabolism; fatty acid biosynthesis. In terms of biological role, carrier of the growing fatty acid chain in fatty acid biosynthesis. The sequence is that of Acyl carrier protein from Lactobacillus acidophilus (strain ATCC 700396 / NCK56 / N2 / NCFM).